The following is a 233-amino-acid chain: Glucosamine-6-phosphate deaminase (233 aa).

D62 serves as the catalytic Proton acceptor; for enolization step. The active-site For ring-opening step is the N128. Residue H130 is the Proton acceptor; for ring-opening step of the active site. E135 acts as the For ring-opening step in catalysis.

The protein belongs to the glucosamine/galactosamine-6-phosphate isomerase family. NagB subfamily.

It carries out the reaction alpha-D-glucosamine 6-phosphate + H2O = beta-D-fructose 6-phosphate + NH4(+). The protein operates within amino-sugar metabolism; N-acetylneuraminate degradation; D-fructose 6-phosphate from N-acetylneuraminate: step 5/5. Functionally, catalyzes the reversible isomerization-deamination of glucosamine 6-phosphate (GlcN6P) to form fructose 6-phosphate (Fru6P) and ammonium ion. This Streptococcus pneumoniae serotype 4 (strain ATCC BAA-334 / TIGR4) protein is Glucosamine-6-phosphate deaminase.